We begin with the raw amino-acid sequence, 495 residues long: Transmembrane protein 161A (495 aa).

The N-terminal stretch at 1–28 (MALMGVQLVVSLLAVSIMQRMAPHLSFA) is a signal peptide. Topologically, residues 29 to 99 (RWLLCNGSLL…VNVMDALVLR (71 aa)) are extracellular. Asn-34 carries N-linked (GlcNAc...) asparagine glycosylation. The helical transmembrane segment at 100-120 (FFVEYQWLIDFAVYATGIYLF) threads the bilayer. At 121–135 (TEGYYSVVDASKEVN) the chain is on the cytoplasmic side. Residues 136–156 (IASIWCVLTVLFCLRTLYLLM) traverse the membrane as a helical segment. Residues 157-167 (SHYFLSEEGGE) lie on the Extracellular side of the membrane. The helical transmembrane segment at 168-188 (RSVCLAFGFLSLLIAMLVLVV) threads the bilayer. The Cytoplasmic segment spans residues 189–227 (REDYLEFGLEPGFTSLFDNFEVFARKQGYEWSVPFTKLS). Residues 228 to 248 (VKLGLAVICAFIGALLAFPGL) form a helical membrane-spanning segment. Topologically, residues 249-265 (RLAQTHLDAVQMNADRP) are extracellular. A helical membrane pass occupies residues 266 to 286 (MIQILLHMSFLSPLVIIVMWI). Residues 287–305 (KPIARDFLGNAPMGKTSVT) lie on the Cytoplasmic side of the membrane. Residues 306 to 326 (LLSSSAFSSVRLWTIVVLCVL) traverse the membrane as a helical segment. At 327 to 367 (RLLLTRYHLQAYLNLAQKWVEQMKKEAGRIAAIDIQRKVTR) the chain is on the extracellular side. Residues 368-388 (IFCYLTVVTLQYLIPILLVLF) form a helical membrane-spanning segment. Topologically, residues 389–465 (STLALKSLGD…ALLTPIFFRG (77 aa)) are cytoplasmic. Residues 466–486 (IFAFLTWWVAACQLISSLFGI) traverse the membrane as a helical segment. Over 487-495 (YFHQYLMHN) the chain is Extracellular.

The protein belongs to the TMEM161 family.

Its subcellular location is the membrane. May play a role in protection against oxidative stress. The sequence is that of Transmembrane protein 161A (tmem161a) from Danio rerio (Zebrafish).